The sequence spans 429 residues: Glutamyl-tRNA reductase (429 aa).

Residues 50 to 53 (TCNR), Ser-108, 113 to 115 (EPQ), and Gln-119 each bind substrate. The active-site Nucleophile is Cys-51. 188-193 (GAGEMI) serves as a coordination point for NADP(+).

It belongs to the glutamyl-tRNA reductase family. As to quaternary structure, homodimer.

It carries out the reaction (S)-4-amino-5-oxopentanoate + tRNA(Glu) + NADP(+) = L-glutamyl-tRNA(Glu) + NADPH + H(+). Its pathway is porphyrin-containing compound metabolism; protoporphyrin-IX biosynthesis; 5-aminolevulinate from L-glutamyl-tRNA(Glu): step 1/2. Catalyzes the NADPH-dependent reduction of glutamyl-tRNA(Glu) to glutamate 1-semialdehyde (GSA). The chain is Glutamyl-tRNA reductase from Polaromonas naphthalenivorans (strain CJ2).